Reading from the N-terminus, the 442-residue chain is 6-phospho-alpha-glucosidase 1 (442 aa).

6 to 72 is an NAD(+) binding site; the sequence is FSVLIAGGGS…PEVEFLATTD (67 aa). Residues R95 and N149 each coordinate substrate. Residue C171 participates in Mn(2+) binding. The active-site Proton donor is D172. Residue H202 participates in Mn(2+) binding. The active-site Proton acceptor is Y265. R285 contributes to the substrate binding site.

This sequence belongs to the glycosyl hydrolase 4 family. In terms of assembly, homodimer. May also form homotetramer. It depends on Mn(2+) as a cofactor. The cofactor is Co(2+). Requires Ni(2+) as cofactor. Fe(2+) is required as a cofactor. Mg(2+) serves as cofactor. It depends on NAD(+) as a cofactor.

The enzyme catalyses alpha-maltose 6'-phosphate + H2O = D-glucose 6-phosphate + D-glucose. Is inhibited by EDTA in vitro. In terms of biological role, is probably involved in the catabolism of alpha-glycosides accumulated via a phosphoenolpyruvate-dependent phosphotransferase system (PEP-PTS). Hydrolyzes a wide variety of 6-phospho-alpha-D-glucosides including the five isomeric derivatives of sucrose, i.e. trehalulose-6'-phosphate, turanose-6'-phosphate, maltulose-6'-phosphate, leucrose-6'-phosphate, and palatinose-6'-phosphate, but is not active on sucrose-6-phosphate. Can also hydrolyze maltose-6'-phosphate and methyl-alpha-glucose-6-phosphate, and poorly, trehalose-6-phosphate. Fails to hydrolyze beta-O-linked phosphorylated disaccharides such as cellobiose-6'-phosphate and gentiobiose-6'-phosphate. Does not seem to be involved in maltose catabolism. This chain is 6-phospho-alpha-glucosidase 1 (simA), found in Lacticaseibacillus paracasei (strain ATCC 334 / BCRC 17002 / CCUG 31169 / CIP 107868 / KCTC 3260 / NRRL B-441) (Lactobacillus paracasei).